Here is a 90-residue protein sequence, read N- to C-terminus: Small ribosomal subunit protein bS20 (90 aa).

Residues 1 to 29 (MANTASAEKRNRQAQKRRARNVQVRTGVK) are disordered.

The protein belongs to the bacterial ribosomal protein bS20 family.

In terms of biological role, binds directly to 16S ribosomal RNA. This chain is Small ribosomal subunit protein bS20, found in Anaeromyxobacter sp. (strain Fw109-5).